The sequence spans 974 residues: Bifunctional glutamine synthetase adenylyltransferase/adenylyl-removing enzyme (974 aa).

The interval 1-464 (MKNAFLKTHL…HYAALFENEQ (464 aa)) is adenylyl removase. The tract at residues 468-974 (LEIGNLVFTG…CSIFKQIMKH (507 aa)) is adenylyl transferase.

Belongs to the GlnE family. Mg(2+) serves as cofactor.

It carries out the reaction [glutamine synthetase]-O(4)-(5'-adenylyl)-L-tyrosine + phosphate = [glutamine synthetase]-L-tyrosine + ADP. It catalyses the reaction [glutamine synthetase]-L-tyrosine + ATP = [glutamine synthetase]-O(4)-(5'-adenylyl)-L-tyrosine + diphosphate. Functionally, involved in the regulation of glutamine synthetase GlnA, a key enzyme in the process to assimilate ammonia. When cellular nitrogen levels are high, the C-terminal adenylyl transferase (AT) inactivates GlnA by covalent transfer of an adenylyl group from ATP to specific tyrosine residue of GlnA, thus reducing its activity. Conversely, when nitrogen levels are low, the N-terminal adenylyl removase (AR) activates GlnA by removing the adenylyl group by phosphorolysis, increasing its activity. The regulatory region of GlnE binds the signal transduction protein PII (GlnB) which indicates the nitrogen status of the cell. The polypeptide is Bifunctional glutamine synthetase adenylyltransferase/adenylyl-removing enzyme (Bartonella quintana (strain Toulouse) (Rochalimaea quintana)).